Here is a 191-residue protein sequence, read N- to C-terminus: uncharacterized protein (191 aa).

4 helical membrane-spanning segments follow: residues 12-32 (FAFL…FFTL), 48-68 (LVAL…LTLF), 92-112 (YISV…LLSL), and 168-188 (IFCL…SCAF).

It localises to the membrane. This is an uncharacterized protein from Saccharomyces cerevisiae (strain ATCC 204508 / S288c) (Baker's yeast).